The primary structure comprises 364 residues: O-methyltransferase ZRP4 (364 aa).

S-adenosyl-L-methionine is bound by residues G208, D231, D251, M252, and K265. Catalysis depends on H269, which acts as the Proton acceptor.

The protein belongs to the class I-like SAM-binding methyltransferase superfamily. Cation-independent O-methyltransferase family. COMT subfamily. As to quaternary structure, homodimer. Accumulates preferentially in the roots and is located predominantly in the region of the endodermis, low levels are seen in the leaves, stems and other shoot organs.

Functionally, may be involved in the O-methylation of suberin phenylpropanoid precursors. The polypeptide is O-methyltransferase ZRP4 (ZRP4) (Zea mays (Maize)).